Reading from the N-terminus, the 270-residue chain is MEKSVIIYVISDAIGETAQHIIRAVTAQFSLNKPADIRRHAFIRDEKALLETLEEAKAADGIVVQTLVQSPLAEYATDFCAQNNIPNIDLLHTLTAAVEAKTGLKSKQDPGNMRRLDSNYFDRIAAIEFAVKYDDCKDPRGLIDADIVLVGVSRTSKTPLSSFLANQNWKVANVPLVPEIPIPDELFQIPNERIIGLTTTPEKLAQIRKVRLKSIGLDESSSYSSEKRILEELEYGYDTFKKLGCQVIHVEDKAIEETAALITEIITSYH.

151 to 158 (GVSRTSKT) is a binding site for ADP.

It belongs to the pyruvate, phosphate/water dikinase regulatory protein family. PDRP subfamily.

It carries out the reaction N(tele)-phospho-L-histidyl/L-threonyl-[pyruvate, phosphate dikinase] + ADP = N(tele)-phospho-L-histidyl/O-phospho-L-threonyl-[pyruvate, phosphate dikinase] + AMP + H(+). It catalyses the reaction N(tele)-phospho-L-histidyl/O-phospho-L-threonyl-[pyruvate, phosphate dikinase] + phosphate + H(+) = N(tele)-phospho-L-histidyl/L-threonyl-[pyruvate, phosphate dikinase] + diphosphate. Its function is as follows. Bifunctional serine/threonine kinase and phosphorylase involved in the regulation of the pyruvate, phosphate dikinase (PPDK) by catalyzing its phosphorylation/dephosphorylation. This chain is Putative pyruvate, phosphate dikinase regulatory protein 2, found in Listeria welshimeri serovar 6b (strain ATCC 35897 / DSM 20650 / CCUG 15529 / CIP 8149 / NCTC 11857 / SLCC 5334 / V8).